A 147-amino-acid chain; its full sequence is Large ribosomal subunit protein mL40 (147 aa).

The transit peptide at 1–26 (MLAQTFKKPHRAVLEQVSGTTVFIRN) directs the protein to the mitochondrion.

It belongs to the mitochondrion-specific ribosomal protein mL40 family. Component of the mitochondrial large ribosomal subunit (mt-LSU). Mature yeast 74S mitochondrial ribosomes consist of a small (37S) and a large (54S) subunit. The 37S small subunit contains a 15S ribosomal RNA (15S mt-rRNA) and 34 different proteins. The 54S large subunit contains a 21S rRNA (21S mt-rRNA) and 46 different proteins.

Its subcellular location is the mitochondrion. Component of the mitochondrial ribosome (mitoribosome), a dedicated translation machinery responsible for the synthesis of mitochondrial genome-encoded proteins, including at least some of the essential transmembrane subunits of the mitochondrial respiratory chain. The mitoribosomes are attached to the mitochondrial inner membrane and translation products are cotranslationally integrated into the membrane. The sequence is that of Large ribosomal subunit protein mL40 (MRPL28) from Saccharomyces cerevisiae (strain ATCC 204508 / S288c) (Baker's yeast).